The primary structure comprises 311 residues: Eukaryotic translation initiation factor 3 subunit E (311 aa).

A PCI domain is found at 100–280; sequence VYYNYPKGRD…MGVKSVSIHE (181 aa).

This sequence belongs to the eIF-3 subunit E family. As to quaternary structure, component of the eukaryotic translation initiation factor 3 (eIF-3) complex.

It localises to the cytoplasm. Component of the eukaryotic translation initiation factor 3 (eIF-3) complex, which is involved in protein synthesis of a specialized repertoire of mRNAs and, together with other initiation factors, stimulates binding of mRNA and methionyl-tRNAi to the 40S ribosome. The eIF-3 complex specifically targets and initiates translation of a subset of mRNAs involved in cell proliferation. The polypeptide is Eukaryotic translation initiation factor 3 subunit E (Caenorhabditis briggsae).